The following is a 388-amino-acid chain: uncharacterized protein (388 aa).

This is an uncharacterized protein from Klebsiella pneumoniae.